A 249-amino-acid chain; its full sequence is Undecaprenyl-diphosphatase (249 aa).

A run of 8 helical transmembrane segments spans residues 11–31 (GLTE…TAIF), 35–55 (PDVG…LIFV), 80–100 (LVLS…FIES), 101–121 (VFSS…LMLL), 135–155 (IPYF…LPGI), 180–200 (FLMS…NVAF), 202–222 (TEQI…LYLV), and 226–246 (VIGG…FFVL).

It belongs to the UppP family.

Its subcellular location is the cell membrane. It catalyses the reaction di-trans,octa-cis-undecaprenyl diphosphate + H2O = di-trans,octa-cis-undecaprenyl phosphate + phosphate + H(+). Its function is as follows. Catalyzes the dephosphorylation of undecaprenyl diphosphate (UPP). The polypeptide is Undecaprenyl-diphosphatase (Methanococcus maripaludis (strain C7 / ATCC BAA-1331)).